Here is a 594-residue protein sequence, read N- to C-terminus: RAS guanyl-releasing protein 2-B (594 aa).

One can recognise an N-terminal Ras-GEF domain in the interval 3–121 (SSDLDKGLTI…SLIDIESVPS (119 aa)). The region spanning 149-382 (DPAELAEHLT…YQLSLQREPR (234 aa)) is the Ras-GEF domain. The interval 377-403 (LQREPRARSTQTHAKSPPSPSPPLEEW) is disordered. 2 consecutive EF-hand domains span residues 418 to 453 (HIEK…FPYL) and 455 to 482 (AFNE…ASSV). The Ca(2+) site is built by D431, D433, D435, H437, E442, D460, N462, D464, K466, and E471. The segment at 490-540 (IHNFAERTFLRPVSCQHCRNLILGIYKKGLKCKACGITCHKHCRDHLSIEC) adopts a Phorbol-ester/DAG-type zinc-finger fold.

This sequence belongs to the RASGRP family.

It is found in the cytoplasm. The protein localises to the cytosol. Its subcellular location is the cell membrane. It localises to the synapse. The protein resides in the synaptosome. Its function is as follows. Functions as a calcium- and DAG-regulated nucleotide exchange factor specifically activating Rap through the exchange of bound GDP for GTP. May function in cell aggregation and adhesion. The protein is RAS guanyl-releasing protein 2-B (rasgrp2-b) of Xenopus laevis (African clawed frog).